Here is a 3587-residue protein sequence, read N- to C-terminus: Tyrocidine synthase 2 (3587 aa).

The segment at 466–1045 (AATMHELFSR…IQALAAYVEG (580 aa)) is domain 1 (Proline-activating). 2 consecutive Carrier domains span residues 972-1047 (APTT…EGGE) and 2007-2082 (APAT…EHSE). O-(pantetheine 4'-phosphoryl)serine occurs at positions 1007 and 2042. Positions 1522–2081 (EQTAVVFGDK…RDLARLIEHS (560 aa)) are domain 2 (Phenylalanine-activating). Residues 2540-3122 (YRADQTIQQL…NSRESEQGVV (583 aa)) are domain 3 (D-phenylalanine-activating). The disordered stretch occupies residues 3017–3040 (NDKIDRKALPKPNQEENRTEQYAA). A compositionally biased stretch (basic and acidic residues) spans 3018 to 3035 (DKIDRKALPKPNQEENRT). Residues 3040–3114 (APQTELEQLL…EAALRVIPNS (75 aa)) form the Carrier 3 domain. The residue at position 3075 (Ser-3075) is an O-(pantetheine 4'-phosphoryl)serine.

Belongs to the ATP-dependent AMP-binding enzyme family. As to quaternary structure, large multienzyme complex of TycA, TycB and TycC. Pantetheine 4'-phosphate is required as a cofactor.

The enzyme catalyses L-phenylalanine + ATP + H2O = D-phenylalanine + AMP + diphosphate + H(+). Its pathway is antibiotic biosynthesis; tyrocidine biosynthesis. Its function is as follows. Activates the second to fourth amino acids in tyrocidine (in tyrocidine A, Pro, Phe, and D-Phe) and epimerizes the last one. The polypeptide is Tyrocidine synthase 2 (tycB) (Brevibacillus parabrevis).